The sequence spans 142 residues: Large ribosomal subunit protein bL17 (142 aa).

Belongs to the bacterial ribosomal protein bL17 family. Part of the 50S ribosomal subunit. Contacts protein L32.

The sequence is that of Large ribosomal subunit protein bL17 from Rickettsia bellii (strain OSU 85-389).